A 599-amino-acid polypeptide reads, in one-letter code: Putative sensor histidine kinase NtrY-like (599 aa).

Helical transmembrane passes span 17 to 37 (VLIFTLATAAIIFACATFYVI), 44 to 64 (FSTIIGFLLVDLAIFLILGVV), 85 to 105 (IVIAFSLVAAIPTIIVSVFSV), and 285 to 305 (IMFIFIALLLLFVAISFGVIF). The HAMP domain occupies 307–361 (AKIVKPIKKLVTATDNVKDGDLTVQVPENEVDKDEIGTLYVAFNRMIKQLSRQQR). Residues 378-589 (KVAHEIKNPL…IIDIKFDLKE (212 aa)) enclose the Histidine kinase domain. The residue at position 381 (His-381) is a Phosphohistidine; by autocatalysis.

The protein localises to the cell membrane. The enzyme catalyses ATP + protein L-histidine = ADP + protein N-phospho-L-histidine.. In terms of biological role, member of the two-component regulatory system RC0948/RC0849. In Rickettsia conorii (strain ATCC VR-613 / Malish 7), this protein is Putative sensor histidine kinase NtrY-like.